Reading from the N-terminus, the 189-residue chain is ATP synthase subunit delta (189 aa).

It belongs to the ATPase delta chain family. As to quaternary structure, F-type ATPases have 2 components, F(1) - the catalytic core - and F(0) - the membrane proton channel. F(1) has five subunits: alpha(3), beta(3), gamma(1), delta(1), epsilon(1). F(0) has three main subunits: a(1), b(2) and c(10-14). The alpha and beta chains form an alternating ring which encloses part of the gamma chain. F(1) is attached to F(0) by a central stalk formed by the gamma and epsilon chains, while a peripheral stalk is formed by the delta and b chains.

The protein resides in the cell inner membrane. F(1)F(0) ATP synthase produces ATP from ADP in the presence of a proton or sodium gradient. F-type ATPases consist of two structural domains, F(1) containing the extramembraneous catalytic core and F(0) containing the membrane proton channel, linked together by a central stalk and a peripheral stalk. During catalysis, ATP synthesis in the catalytic domain of F(1) is coupled via a rotary mechanism of the central stalk subunits to proton translocation. Its function is as follows. This protein is part of the stalk that links CF(0) to CF(1). It either transmits conformational changes from CF(0) to CF(1) or is implicated in proton conduction. This is ATP synthase subunit delta from Rickettsia bellii (strain OSU 85-389).